The primary structure comprises 210 residues: Glycerol-3-phosphate acyltransferase (210 aa).

5 consecutive transmembrane segments (helical) span residues 4 to 24 (LIVA…IVSA), 52 to 72 (AAIL…WLTG), 82 to 102 (DTSV…PVFF), 118 to 138 (LAIN…VAFF), and 159 to 179 (FLFG…LLIW).

It belongs to the PlsY family. In terms of assembly, probably interacts with PlsX.

The protein localises to the cell inner membrane. It catalyses the reaction an acyl phosphate + sn-glycerol 3-phosphate = a 1-acyl-sn-glycero-3-phosphate + phosphate. It participates in lipid metabolism; phospholipid metabolism. In terms of biological role, catalyzes the transfer of an acyl group from acyl-phosphate (acyl-PO(4)) to glycerol-3-phosphate (G3P) to form lysophosphatidic acid (LPA). This enzyme utilizes acyl-phosphate as fatty acyl donor, but not acyl-CoA or acyl-ACP. The polypeptide is Glycerol-3-phosphate acyltransferase (Paraburkholderia phymatum (strain DSM 17167 / CIP 108236 / LMG 21445 / STM815) (Burkholderia phymatum)).